The following is a 548-amino-acid chain: Biotin-dependent acetyl-/propionyl-coenzyme A carboxylase beta5 subunit (548 aa).

Residues 1-23 (MTSVTDRSAHSAERSTEHTIDIH) are disordered. Residues 7–21 (RSAHSAERSTEHTID) show a composition bias toward basic and acidic residues. The CoA carboxyltransferase N-terminal domain occupies 25 to 281 (TAGKLAELHK…NNSTDAPRYQ (257 aa)). Residues 295-541 (DEDLELDTLI…ERKIAQLPPK (247 aa)) enclose the CoA carboxyltransferase C-terminal domain.

The protein belongs to the AccD/PCCB family. In terms of assembly, the biotin-dependent acyl-CoA carboxylase complex is composed of AccA3, which contains the biotin carboxylase (BC) and biotin carboxyl carrier protein (BCCP) domains, and AccD5, which contains the carboxyl transferase (CT) domain.

The enzyme catalyses N(6)-carboxybiotinyl-L-lysyl-[protein] + acetyl-CoA = N(6)-biotinyl-L-lysyl-[protein] + malonyl-CoA. It carries out the reaction N(6)-carboxybiotinyl-L-lysyl-[protein] + propanoyl-CoA = methylmalonyl-CoA + N(6)-biotinyl-L-lysyl-[protein]. It functions in the pathway lipid metabolism; mycolic acid biosynthesis. Its function is as follows. Component of a biotin-dependent acyl-CoA carboxylase complex. This subunit transfers the CO2 from carboxybiotin to the CoA ester substrate. When associated with the alpha3 subunit AccA3, is involved in the carboxylation of acetyl-CoA and propionyl-CoA. The chain is Biotin-dependent acetyl-/propionyl-coenzyme A carboxylase beta5 subunit (accD5) from Mycobacterium tuberculosis (strain CDC 1551 / Oshkosh).